Reading from the N-terminus, the 2022-residue chain is Transient receptor potential cation channel subfamily M member 6 (2022 aa).

Residues Met1–Lys741 are Cytoplasmic-facing. Residues Asn742–Phe762 form a helical membrane-spanning segment. Residues Lys763 to Lys841 lie on the Extracellular side of the membrane. A helical membrane pass occupies residues Phe842–Val862. Residues Glu863 to Trp905 lie on the Cytoplasmic side of the membrane. A helical transmembrane segment spans residues Ile906–Val926. Topologically, residues Leu927–Arg939 are extracellular. A helical transmembrane segment spans residues Leu940–Asn960. Residues Gln961–Lys972 lie on the Cytoplasmic side of the membrane. Residues Met973–Val993 form a helical membrane-spanning segment. Residues Ala994 to Asp1012 lie on the Extracellular side of the membrane. Residues Ile1013–Cys1033 constitute an intramembrane region (pore-forming). At Ser1034–Pro1047 the chain is on the extracellular side. The helical transmembrane segment at Phe1048 to Phe1068 threads the bilayer. Topologically, residues Phe1069–Leu2022 are cytoplasmic. Residues Thr1479–Gly1516 form a disordered region. Residues Asp1483–Gln1493 show a composition bias toward basic and acidic residues. Polar residues predominate over residues Ala1494–Cys1512. The Alpha-type protein kinase domain occupies Asn1750–Leu1980. ADP contacts are provided by Gly1777, Gly1778, Leu1779, Arg1780, and Lys1804. Thr1851 is modified (phosphothreonine; by autocatalysis). 2 residues coordinate ADP: Glu1876 and Met1879. Residue His1909 participates in Zn(2+) binding. Catalysis depends on Asp1923, which acts as the Proton acceptor. Asp1933 is an ADP binding site. Zn(2+) is bound by residues His1966, Cys1968, and Cys1972. The interval Glu1997–Leu2022 is disordered. A compositionally biased stretch (basic and acidic residues) spans Ile1998–Pro2016.

It in the C-terminal section; belongs to the protein kinase superfamily. Alpha-type protein kinase family. ALPK subfamily. This sequence in the N-terminal section; belongs to the transient receptor (TC 1.A.4) family. LTrpC subfamily. TRPM6 sub-subfamily. Homomers. Forms heteromers with TRPM7; TRPM6 increases the current amplitude of TRPM6/7 heteromers as compared to TRPM7 homomer. Interacts (via kinase domain) with RACK1. Autophosphorylated; autophosphorylation controlls the protein kinase activity of TRPM6 towards their substrates. Autophosphorylation of Thr-1851 in the kinase domain is essential for the inhibitory effect of RACK1. Post-translationally, the C-terminus of TRPM6 is proteolytically cleaved in vivo, in a cell type-specific fashion, releasing the kinase module from the transmembrane domain. The cleaved kinase fragments are translocated to the nucleus to phosphorylate histones and regulate gene expression. Highly expressed in kidney and colon. Isoform TRPM6a and isoform TRPM6b, are coexpressed with TRPM7 in kidney, and testis, and are also found in several cell lines of lung origin. Isoform TRPM6c is detected only in testis and in NCI-H510A small cell lung carcinoma cells.

Its subcellular location is the cell membrane. The protein resides in the apical cell membrane. The protein localises to the nucleus. The catalysed reaction is L-seryl-[protein] + ATP = O-phospho-L-seryl-[protein] + ADP + H(+). It catalyses the reaction L-threonyl-[protein] + ATP = O-phospho-L-threonyl-[protein] + ADP + H(+). It carries out the reaction Mg(2+)(in) = Mg(2+)(out). The enzyme catalyses Ca(2+)(in) = Ca(2+)(out). The catalysed reaction is Zn(2+)(in) = Zn(2+)(out). Its activity is regulated as follows. Strongly inhibited by intracellular Mg(2+); unlikely to be active at physiological levels of intracellular Mg(2+). In the heteromeric TRPM6-TRPM7 channels complexes, TRPM7 are able to offset the very high sensitivity of TRPM6 to cytosolic Mg(2+) to physiologically relevant concentrations, whereas TRPM6 relieve TRPM7 from the inhibitory action of Mg-ATP. Consequently, the association of TRPM6 with TRPM7 allow for high constitutive activity of TRPM6/7 in the presence of physiological levels of Mg(2+) and Mg-ATP. The kinase activity is controlled through the autophosphorylation of a serine/threonine-rich region located to the N-terminal of the catalytic domain. Bifunctional protein that combines an ion channel with an intrinsic kinase domain, enabling it to modulate cellular functions either by conducting ions through the pore or by phosphorylating downstream proteins via its kinase domain. Crucial for Mg(2+) homeostasis. Has an important role in epithelial Mg(2+) transport and in the active Mg(2+) absorption in the gut and kidney. However, whether TRPM6 forms functional homomeric channels by itself or functions primarily as a subunit of heteromeric TRPM6-TRPM7 channels, is still under debate. Its function is as follows. The C-terminal kinase domain can be cleaved from the channel segment in a cell-type-specific fashion. The cleaved kinase fragments can translocate to the nucleus, and bind chromatin-remodeling complex proteins to ultimately phosphorylate specific Ser/Thr residues of histones known to be functionally important for cell differentiation and development. The protein is Transient receptor potential cation channel subfamily M member 6 (TRPM6) of Homo sapiens (Human).